The sequence spans 683 residues: Bifunctional lysine-specific demethylase and histidyl-hydroxylase NO66 (683 aa).

Over residues 1 to 26 the composition is skewed to polar residues; sequence MHKASTSSANRANFQGNHKTQKSPNN. Disordered stretches follow at residues 1-162 and 179-208; these read MHKA…SPIQ and AAGASGASGPAKSCPLPEKRKSLPAGAAKS. The segment covering 54-65 has biased composition (basic and acidic residues); that stretch reads LTKEQKERRKMM. A compositionally biased stretch (polar residues) spans 85–94; the sequence is IDTSASTSNK. Residues 95–108 show a composition bias toward basic residues; sequence GKSKAARPTDRKRR. Low complexity predominate over residues 116–125; that stretch reads PADANNNNTK. Ser-152 carries the post-translational modification Phosphoserine. A Phosphothreonine modification is found at Thr-158. Residue Ser-159 is modified to Phosphoserine. Residues 179–189 show a composition bias toward low complexity; the sequence is AAGASGASGPA. The 140-residue stretch at 341 to 480 folds into the JmjC domain; the sequence is NPSTYLVGLR…NLLEKLMPIV (140 aa). The Fe cation site is built by His-381, Asp-383, and His-446.

This sequence belongs to the ROX family. NO66 subfamily. Requires Fe(2+) as cofactor.

It is found in the nucleus. It carries out the reaction N(6),N(6)-dimethyl-L-lysyl(36)-[histone H3] + 2 2-oxoglutarate + 2 O2 = L-lysyl(36)-[histone H3] + 2 formaldehyde + 2 succinate + 2 CO2. Its function is as follows. Oxygenase that can act as both a histone lysine demethylase and a ribosomal histidine hydroxylase. Specifically demethylates 'Lys-4' (H3K4me) and 'Lys-36' (H3K36me) of histone H3, thereby playing a central role in histone code. The chain is Bifunctional lysine-specific demethylase and histidyl-hydroxylase NO66 from Drosophila yakuba (Fruit fly).